A 98-amino-acid chain; its full sequence is Ferredoxin-like protein (98 aa).

A 4Fe-4S ferredoxin-type domain is found at 57 to 87 (GQVEVTADGCMECGTCRVLCEANGDVEWSYP).

The protein to ferredoxins from P.putida and C.tartarivorum, ferredoxin I from A.vinelandii, ferredoxin II from D.desulfuricans.

In terms of biological role, could be a 3Fe-4S cluster-containing protein. The protein is Ferredoxin-like protein (fixX) of Rhizobium meliloti (strain 1021) (Ensifer meliloti).